Here is a 321-residue protein sequence, read N- to C-terminus: 4-dihydromethyl-trisporate dehydrogenase (321 aa).

The Proton donor role is filled by Y51. H113 contacts substrate.

Belongs to the aldo/keto reductase family.

It functions in the pathway pheromone biosynthesis; trisporate biosynthesis. Catalyzes the NADP-dependent oxidation of (+) mating-type specific precursor 4-dihydromethyl-trisporate to methyl-trisporate. The chain is 4-dihydromethyl-trisporate dehydrogenase (tdh) from Mucor mucedo (Common pinmould).